The primary structure comprises 65 residues: Pancreatic polypeptide prohormone (65 aa).

At Y36 the chain carries Tyrosine amide. A propeptide spanning residues 59 to 65 (ELSPMGA) is cleaved from the precursor.

It belongs to the NPY family.

The protein localises to the secreted. In terms of biological role, hormone secreted by pancreatic cells that acts as a regulator of pancreatic and gastrointestinal functions probably by signaling through the G protein-coupled receptor NPY4R2. This chain is Pancreatic polypeptide prohormone (PPY), found in Sus scrofa (Pig).